A 93-amino-acid chain; its full sequence is Large ribosomal subunit protein eL31 (93 aa).

The protein belongs to the eukaryotic ribosomal protein eL31 family.

The chain is Large ribosomal subunit protein eL31 from Methanosarcina mazei (strain ATCC BAA-159 / DSM 3647 / Goe1 / Go1 / JCM 11833 / OCM 88) (Methanosarcina frisia).